Here is a 108-residue protein sequence, read N- to C-terminus: Large ribosomal subunit protein P1B (108 aa).

Residues 72–84 (AGSASGAAAGGEA) are compositionally biased toward low complexity. Residues 72 to 108 (AGSASGAAAGGEAAAEEAAEEEAAEESDDDMGFGLFD) form a disordered region. Over residues 85-102 (AAEEAAEEEAAEESDDDM) the composition is skewed to acidic residues.

Belongs to the eukaryotic ribosomal protein P1/P2 family. As to quaternary structure, P1 and P2 exist as dimers at the large ribosomal subunit. Post-translationally, phosphorylated.

Plays an important role in the elongation step of protein synthesis. The protein is Large ribosomal subunit protein P1B (RPP1B) of Candida albicans (Yeast).